The following is a 479-amino-acid chain: Poly(A) polymerase catalytic subunit (479 aa).

Catalysis depends on residues Asp-202 and Asp-204. Positions 202, 204, and 253 each coordinate Ca(2+).

This sequence belongs to the poxviridae poly(A) polymerase catalytic subunit family. Heterodimer of a large (catalytic) subunit and a small (regulatory) subunit.

The catalysed reaction is RNA(n) + ATP = RNA(n)-3'-adenine ribonucleotide + diphosphate. In terms of biological role, polymerase that creates the 3'-poly(A) tail of mRNA's. This Bos taurus (Bovine) protein is Poly(A) polymerase catalytic subunit (OPG063).